Reading from the N-terminus, the 161-residue chain is DNA-directed RNA polymerase 18 kDa subunit (161 aa).

It belongs to the poxviridae DNA-directed RNA polymerase 18 kDa subunit family. In terms of assembly, the DNA-dependent RNA polymerase used for intermediate and late genes expression consists of eight subunits Rpo30/OPG66, Rpo7/OPG90, Rpo22/OPG103, Rpo147/OPG105, Rpo18/OPG119, Rpo19/OPG131, Rpo132/OPG151 and Rpo35/OPG156. The same holoenzyme, with the addition of the transcription-specificity factor OPG109, is used for early gene expression.

The protein localises to the virion. The catalysed reaction is RNA(n) + a ribonucleoside 5'-triphosphate = RNA(n+1) + diphosphate. In terms of biological role, part of the DNA-dependent RNA polymerase which catalyzes the transcription of viral DNA into RNA using the four ribonucleoside triphosphates as substrates. Responsible for the transcription of early, intermediate and late genes. DNA-dependent RNA polymerase associates with the early transcription factor (ETF), itself composed of OPG118 and OPG133, thereby allowing the early genes transcription. Late transcription, and probably also intermediate transcription, require newly synthesized RNA polymerase. The polypeptide is DNA-directed RNA polymerase 18 kDa subunit (OPG119) (Vaccinia virus (strain Ankara) (VACV)).